Reading from the N-terminus, the 37-residue chain is Large ribosomal subunit protein bL36c (37 aa).

The protein belongs to the bacterial ribosomal protein bL36 family.

It is found in the plastid. It localises to the chloroplast. In Bigelowiella natans (Pedinomonas minutissima), this protein is Large ribosomal subunit protein bL36c.